A 210-amino-acid polypeptide reads, in one-letter code: Shikimate kinase (210 aa).

Residue 34–39 coordinates ATP; sequence GVGKSV. Ser-38 lines the Mg(2+) pocket. Positions 56, 80, and 102 each coordinate substrate. An ATP-binding site is contributed by Arg-140. Arg-159 lines the substrate pocket.

The protein belongs to the shikimate kinase family. As to quaternary structure, monomer. It depends on Mg(2+) as a cofactor.

The protein resides in the cytoplasm. The enzyme catalyses shikimate + ATP = 3-phosphoshikimate + ADP + H(+). It participates in metabolic intermediate biosynthesis; chorismate biosynthesis; chorismate from D-erythrose 4-phosphate and phosphoenolpyruvate: step 5/7. Its function is as follows. Catalyzes the specific phosphorylation of the 3-hydroxyl group of shikimic acid using ATP as a cosubstrate. The polypeptide is Shikimate kinase (Bartonella henselae (strain ATCC 49882 / DSM 28221 / CCUG 30454 / Houston 1) (Rochalimaea henselae)).